The sequence spans 269 residues: Cytochrome c oxidase subunit 3 (269 aa).

A run of 7 helical transmembrane segments spans residues 21–41 (PWPI…ALAM), 45–65 (IGNM…ATLW), 90–110 (GFLL…WAYF), 138–160 (PLLN…HALI), 167–187 (ALSG…CQYI), 205–225 (FYAG…MLAI), and 247–267 (VIYL…FYWW).

This sequence belongs to the cytochrome c oxidase subunit 3 family. As to quaternary structure, component of the cytochrome c oxidase (complex IV, CIV), a multisubunit enzyme composed of a catalytic core of 3 subunits and several supernumerary subunits. The complex exists as a monomer or a dimer and forms supercomplexes (SCs) in the inner mitochondrial membrane with ubiquinol-cytochrome c oxidoreductase (cytochrome b-c1 complex, complex III, CIII).

It localises to the mitochondrion inner membrane. The catalysed reaction is 4 Fe(II)-[cytochrome c] + O2 + 8 H(+)(in) = 4 Fe(III)-[cytochrome c] + 2 H2O + 4 H(+)(out). Functionally, component of the cytochrome c oxidase, the last enzyme in the mitochondrial electron transport chain which drives oxidative phosphorylation. The respiratory chain contains 3 multisubunit complexes succinate dehydrogenase (complex II, CII), ubiquinol-cytochrome c oxidoreductase (cytochrome b-c1 complex, complex III, CIII) and cytochrome c oxidase (complex IV, CIV), that cooperate to transfer electrons derived from NADH and succinate to molecular oxygen, creating an electrochemical gradient over the inner membrane that drives transmembrane transport and the ATP synthase. Cytochrome c oxidase is the component of the respiratory chain that catalyzes the reduction of oxygen to water. Electrons originating from reduced cytochrome c in the intermembrane space (IMS) are transferred via the dinuclear copper A center (CU(A)) of subunit 2 and heme A of subunit 1 to the active site in subunit 1, a binuclear center (BNC) formed by heme A3 and copper B (CU(B)). The BNC reduces molecular oxygen to 2 water molecules using 4 electrons from cytochrome c in the IMS and 4 protons from the mitochondrial matrix. In Lachancea kluyveri (strain ATCC 58438 / CBS 3082 / BCRC 21498 / NBRC 1685 / JCM 7257 / NCYC 543 / NRRL Y-12651) (Yeast), this protein is Cytochrome c oxidase subunit 3 (COX3).